Here is a 187-residue protein sequence, read N- to C-terminus: Adenine phosphoribosyltransferase (187 aa).

The protein belongs to the purine/pyrimidine phosphoribosyltransferase family. As to quaternary structure, homodimer.

It localises to the cytoplasm. The catalysed reaction is AMP + diphosphate = 5-phospho-alpha-D-ribose 1-diphosphate + adenine. It participates in purine metabolism; AMP biosynthesis via salvage pathway; AMP from adenine: step 1/1. Functionally, catalyzes a salvage reaction resulting in the formation of AMP, that is energically less costly than de novo synthesis. This is Adenine phosphoribosyltransferase from Yersinia enterocolitica serotype O:8 / biotype 1B (strain NCTC 13174 / 8081).